Reading from the N-terminus, the 208-residue chain is ATP-dependent Clp protease proteolytic subunit 2 (208 aa).

The active-site Nucleophile is Ser102. His127 is an active-site residue.

It belongs to the peptidase S14 family. As to quaternary structure, fourteen ClpP subunits assemble into 2 heptameric rings which stack back to back to give a disk-like structure with a central cavity, resembling the structure of eukaryotic proteasomes.

It localises to the cytoplasm. The catalysed reaction is Hydrolysis of proteins to small peptides in the presence of ATP and magnesium. alpha-casein is the usual test substrate. In the absence of ATP, only oligopeptides shorter than five residues are hydrolyzed (such as succinyl-Leu-Tyr-|-NHMec, and Leu-Tyr-Leu-|-Tyr-Trp, in which cleavage of the -Tyr-|-Leu- and -Tyr-|-Trp bonds also occurs).. Its function is as follows. Cleaves peptides in various proteins in a process that requires ATP hydrolysis. Has a chymotrypsin-like activity. Plays a major role in the degradation of misfolded proteins. The protein is ATP-dependent Clp protease proteolytic subunit 2 of Chelativorans sp. (strain BNC1).